A 319-amino-acid polypeptide reads, in one-letter code: Non-homologous end joining protein Ku (319 aa).

The region spanning 10–188 (ISFGLVTVPI…PQGIELSEDE (179 aa)) is the Ku domain. The interval 252–319 (QSVAKAKASR…TTPKKPRRSA (68 aa)) is disordered. A compositionally biased stretch (basic and acidic residues) spans 260–274 (SRGESGEADVHELPR). Over residues 305 to 319 (TAAKKTTPKKPRRSA) the composition is skewed to basic residues.

This sequence belongs to the prokaryotic Ku family. Homodimer. Interacts with LigD.

In terms of biological role, with LigD forms a non-homologous end joining (NHEJ) DNA repair enzyme, which repairs dsDNA breaks with reduced fidelity. Binds linear dsDNA with 5'- and 3'- overhangs but not closed circular dsDNA nor ssDNA. Recruits and stimulates the ligase activity of LigD. In Streptomyces avermitilis (strain ATCC 31267 / DSM 46492 / JCM 5070 / NBRC 14893 / NCIMB 12804 / NRRL 8165 / MA-4680), this protein is Non-homologous end joining protein Ku.